Here is a 194-residue protein sequence, read N- to C-terminus: Peptidyl-tRNA hydrolase (194 aa).

A tRNA-binding site is contributed by Tyr-16. The Proton acceptor role is filled by His-21. Phe-67, Asn-69, and Asn-115 together coordinate tRNA.

Belongs to the PTH family. In terms of assembly, monomer.

The protein localises to the cytoplasm. It catalyses the reaction an N-acyl-L-alpha-aminoacyl-tRNA + H2O = an N-acyl-L-amino acid + a tRNA + H(+). Functionally, hydrolyzes ribosome-free peptidyl-tRNAs (with 1 or more amino acids incorporated), which drop off the ribosome during protein synthesis, or as a result of ribosome stalling. Its function is as follows. Catalyzes the release of premature peptidyl moieties from peptidyl-tRNA molecules trapped in stalled 50S ribosomal subunits, and thus maintains levels of free tRNAs and 50S ribosomes. The polypeptide is Peptidyl-tRNA hydrolase (Escherichia coli O81 (strain ED1a)).